We begin with the raw amino-acid sequence, 954 residues long: Mycolic acid-containing lipids exporter MmpL11 (954 aa).

Helical transmembrane passes span 11–31 (FRWA…YLAL), 188–208 (IVLI…LPLV), 214–234 (VVVT…SVFV), 235–255 (TSTV…FILM), 279–299 (GLAV…IYLI), 312–334 (ILAV…ATFG), 373–393 (AIAA…MVLG), 529–549 (TQPL…LVSI), 559–579 (VLMT…VFQW), 597–617 (IPPL…IFLL), 648–668 (AALI…PLVA), and 670–690 (LGVA…LVLV).

It is found in the cell inner membrane. Functionally, contributes to cell wall biosynthesis and biofilm formation. Transports the mycolic acid-containing lipids monomeromycolyl diacylglycerol (MMDAG) and mycolate ester wax (WE) to the bacterial surface. The chain is Mycolic acid-containing lipids exporter MmpL11 from Mycolicibacterium smegmatis (strain ATCC 700084 / mc(2)155) (Mycobacterium smegmatis).